A 114-amino-acid chain; its full sequence is BolA-like protein DDB_G0274169 (114 aa).

Over residues 88–98 (TQWKKNNQTKI) the composition is skewed to polar residues. The interval 88 to 114 (TQWKKNNQTKINVDDDKSPSCKGGFGK) is disordered.

It belongs to the BolA/IbaG family.

The chain is BolA-like protein DDB_G0274169 from Dictyostelium discoideum (Social amoeba).